The chain runs to 58 residues: Sperm protamine P2 (58 aa).

The segment at arginine 1–lysine 58 is disordered.

In terms of tissue distribution, gonads.

Its subcellular location is the nucleus. It localises to the chromosome. In terms of biological role, protamines substitute for histones in the chromatin of sperm during the haploid phase of spermatogenesis. They compact sperm DNA into a highly condensed, stable and inactive complex. The sequence is that of Sperm protamine P2 from Bolinus brandaris (Purple dye murex).